A 326-amino-acid chain; its full sequence is N-acetyl-gamma-glutamyl-phosphate reductase (326 aa).

Cysteine 155 is a catalytic residue.

The protein belongs to the NAGSA dehydrogenase family. Type 1 subfamily.

The protein localises to the cytoplasm. The catalysed reaction is N-acetyl-L-glutamate 5-semialdehyde + phosphate + NADP(+) = N-acetyl-L-glutamyl 5-phosphate + NADPH + H(+). It participates in amino-acid biosynthesis; L-arginine biosynthesis; N(2)-acetyl-L-ornithine from L-glutamate: step 3/4. Functionally, catalyzes the NADPH-dependent reduction of N-acetyl-5-glutamyl phosphate to yield N-acetyl-L-glutamate 5-semialdehyde. The polypeptide is N-acetyl-gamma-glutamyl-phosphate reductase (Shewanella woodyi (strain ATCC 51908 / MS32)).